A 306-amino-acid chain; its full sequence is Recombination-associated protein RdgC (306 aa).

The protein belongs to the RdgC family.

The protein resides in the cytoplasm. It localises to the nucleoid. Functionally, may be involved in recombination. The polypeptide is Recombination-associated protein RdgC (Pseudomonas paraeruginosa (strain DSM 24068 / PA7) (Pseudomonas aeruginosa (strain PA7))).